Reading from the N-terminus, the 677-residue chain is Methionine--tRNA ligase (677 aa).

The 'HIGH' region signature appears at 15–25 (PYANGSIHLGH). Zn(2+) is bound by residues cysteine 146, cysteine 149, cysteine 159, and cysteine 162. Positions 333–337 (KMSKS) match the 'KMSKS' region motif. Lysine 336 contributes to the ATP binding site. One can recognise a tRNA-binding domain in the interval 575–677 (DFAKVDLRVA…AGAKPGHQVK (103 aa)).

It belongs to the class-I aminoacyl-tRNA synthetase family. MetG type 1 subfamily. Homodimer. Zn(2+) is required as a cofactor.

The protein localises to the cytoplasm. It carries out the reaction tRNA(Met) + L-methionine + ATP = L-methionyl-tRNA(Met) + AMP + diphosphate. In terms of biological role, is required not only for elongation of protein synthesis but also for the initiation of all mRNA translation through initiator tRNA(fMet) aminoacylation. This Escherichia coli (strain UTI89 / UPEC) protein is Methionine--tRNA ligase.